The primary structure comprises 205 residues: MRKRISAIIMTLFMVFMSCNNGGPELKSDEVAKSDGTVLDLAKVSKKIKEVSAFAASVKEVHTLIKSIGDLAKAIGKKIKTDETGTLESSTADQNEQLVAGAFQVVSTVKGELESLVQVDGISDDLKAKVNEAKNANDGLLSKFKSSAKDNESVKKDEEAKKVIDRTNASATELKKLDTAVDELLKAANEAVSAAIAELTAPAKS.

A signal peptide spans 1–18; sequence MRKRISAIIMTLFMVFMS. Residue C19 is the site of N-palmitoyl cysteine attachment. A lipid anchor (S-diacylglycerol cysteine) is attached at C19.

It belongs to the variable small protein (Vsp) family.

The protein resides in the cell outer membrane. In terms of biological role, the Vlp and Vsp proteins are antigenically distinct proteins, only one vlp or vsp gene is transcriptionally active at any one time. Switching between these genes is a mechanism of host immune response evasion. In Borrelia hermsii, this protein is Variable small protein 11.